The sequence spans 544 residues: Inosine-5'-monophosphate dehydrogenase (544 aa).

CBS domains follow at residues 132 to 192 (FITD…PIKS) and 194 to 250 (MTTE…PYAS). NAD(+) contacts are provided by residues 288 to 290 (DSS) and 338 to 340 (GMG). K(+) is bound by residues G340 and G342. S343 lines the IMP pocket. C345 contributes to the K(+) binding site. The active-site Thioimidate intermediate is C345. IMP-binding positions include 378–380 (DGG), 401–402 (GG), and 425–429 (YRGMG). R458 serves as the catalytic Proton acceptor. Position 470 (Q470) interacts with IMP. Residues E529, G530, and G531 each contribute to the K(+) site.

It belongs to the IMPDH/GMPR family. In terms of assembly, homotetramer. Requires K(+) as cofactor.

Its subcellular location is the cytoplasm. It catalyses the reaction IMP + NAD(+) + H2O = XMP + NADH + H(+). It participates in purine metabolism; XMP biosynthesis via de novo pathway; XMP from IMP: step 1/1. Mycophenolic acid (MPA) is a non-competitive inhibitor that prevents formation of the closed enzyme conformation by binding to the same site as the amobile flap. In contrast, mizoribine monophosphate (MZP) is a competitive inhibitor that induces the closed conformation. MPA is a potent inhibitor of mammalian IMPDHs but a poor inhibitor of the bacterial enzymes. MZP is a more potent inhibitor of bacterial IMPDH. Its function is as follows. Catalyzes the conversion of inosine 5'-phosphate (IMP) to xanthosine 5'-phosphate (XMP), the first committed and rate-limiting step in the de novo synthesis of guanine nucleotides, and therefore plays an important role in the regulation of cell growth. This chain is Inosine-5'-monophosphate dehydrogenase, found in Cryptococcus neoformans var. neoformans serotype D (strain JEC21 / ATCC MYA-565) (Filobasidiella neoformans).